Reading from the N-terminus, the 302-residue chain is Deoxyhypusine hydroxylase (302 aa).

An N-acetylmethionine modification is found at Met-1. 5 HEAT-like PBS-type repeats span residues Leu-54–Asp-80, Val-87–Asp-113, Glu-175–Cys-201, Phe-206–Arg-232, and Val-239–Asp-265. Residues His-56, His-89, and Glu-90 each contribute to the Fe cation site. Positions 208, 241, and 242 each coordinate Fe cation.

It belongs to the deoxyhypusine hydroxylase family. The cofactor is Fe(2+).

It carries out the reaction [eIF5A protein]-deoxyhypusine + AH2 + O2 = [eIF5A protein]-hypusine + A + H2O. Its pathway is protein modification; eIF5A hypusination. Catalyzes the hydroxylation of the N(6)-(4-aminobutyl)-L-lysine intermediate produced by deoxyhypusine synthase/DHPS on a critical lysine of the eukaryotic translation initiation factor 5A/eIF-5A. This is the second step of the post-translational modification of that lysine into an unusual amino acid residue named hypusine. Hypusination is unique to mature eIF-5A factor and is essential for its function. This chain is Deoxyhypusine hydroxylase, found in Mus musculus (Mouse).